A 388-amino-acid chain; its full sequence is Succinate--CoA ligase [ADP-forming] subunit beta (388 aa).

One can recognise an ATP-grasp domain in the interval 9–244 (KEILRKFGVA…PDEEDPKETQ (236 aa)). Residues Lys-46, 53 to 55 (GRG), Glu-99, Cys-102, and Glu-107 contribute to the ATP site. Asn-199 and Asp-213 together coordinate Mg(2+). Substrate-binding positions include Asn-264 and 321-323 (GIM).

Belongs to the succinate/malate CoA ligase beta subunit family. As to quaternary structure, heterotetramer of two alpha and two beta subunits. Mg(2+) serves as cofactor.

The enzyme catalyses succinate + ATP + CoA = succinyl-CoA + ADP + phosphate. It catalyses the reaction GTP + succinate + CoA = succinyl-CoA + GDP + phosphate. The protein operates within carbohydrate metabolism; tricarboxylic acid cycle; succinate from succinyl-CoA (ligase route): step 1/1. Its function is as follows. Succinyl-CoA synthetase functions in the citric acid cycle (TCA), coupling the hydrolysis of succinyl-CoA to the synthesis of either ATP or GTP and thus represents the only step of substrate-level phosphorylation in the TCA. The beta subunit provides nucleotide specificity of the enzyme and binds the substrate succinate, while the binding sites for coenzyme A and phosphate are found in the alpha subunit. The sequence is that of Succinate--CoA ligase [ADP-forming] subunit beta from Anaeromyxobacter dehalogenans (strain 2CP-1 / ATCC BAA-258).